The sequence spans 185 residues: Ribosome-recycling factor (185 aa).

It belongs to the RRF family.

It is found in the cytoplasm. Its function is as follows. Responsible for the release of ribosomes from messenger RNA at the termination of protein biosynthesis. May increase the efficiency of translation by recycling ribosomes from one round of translation to another. The protein is Ribosome-recycling factor of Buchnera aphidicola subsp. Schizaphis graminum (strain Sg).